A 124-amino-acid polypeptide reads, in one-letter code: uncharacterized protein (124 aa).

Residues 70–90 (LLYLALVLLLVVILSTAFFSI) form a helical membrane-spanning segment.

It is found in the membrane. This is an uncharacterized protein from Saccharomyces cerevisiae (strain ATCC 204508 / S288c) (Baker's yeast).